The sequence spans 145 residues: D-aminoacyl-tRNA deacylase (145 aa).

The Gly-cisPro motif, important for rejection of L-amino acids motif lies at 137-138; that stretch reads GP.

It belongs to the DTD family. As to quaternary structure, homodimer.

Its subcellular location is the cytoplasm. It carries out the reaction glycyl-tRNA(Ala) + H2O = tRNA(Ala) + glycine + H(+). It catalyses the reaction a D-aminoacyl-tRNA + H2O = a tRNA + a D-alpha-amino acid + H(+). Its function is as follows. An aminoacyl-tRNA editing enzyme that deacylates mischarged D-aminoacyl-tRNAs. Also deacylates mischarged glycyl-tRNA(Ala), protecting cells against glycine mischarging by AlaRS. Acts via tRNA-based rather than protein-based catalysis; rejects L-amino acids rather than detecting D-amino acids in the active site. By recycling D-aminoacyl-tRNA to D-amino acids and free tRNA molecules, this enzyme counteracts the toxicity associated with the formation of D-aminoacyl-tRNA entities in vivo and helps enforce protein L-homochirality. The sequence is that of D-aminoacyl-tRNA deacylase from Pelobacter propionicus (strain DSM 2379 / NBRC 103807 / OttBd1).